Consider the following 506-residue polypeptide: MQLKLEHFNIKIGQHKILLNIADAKELGVNPGDRVRIRGRESISAIADTTDDMVPPGTLGVFSEVYEHFVNWDKPVEVVPAFRSKSASVIKKMMDKKPVVQEEIKTLVNDIVEENLSEIELSAFITSSYIHGMTDDEVEWLTRAMIESGDTIEFDTHPIMDKHSIGGVPGNKISLLVVPIIAANGLLIPKTSSRAITGAGGTADLMEVLCPVEFSSQEVKEITEKVGGALVWGGATNIAPADDKLIRVEYPLSIDPYYQMLASIMAKKGAIGADNVVMDIPVGPSTKVPTVQEGQKLARDLINLGHRLGMNVECAITYGSSPIGRKVGPSLEVREALKVLESMEGPNSLIEKSAALAGILLEMGGAAPRDRGKEIALETLRSGKALEKMKQIIEAQGGDPKITSADIQVGQYTADILASADGYVIEFDNKWIIEIARLAGAPNDKGAGVAIHKKMGESVKKGDPILTIYAEKEFKLETALATAQRTNPIVVEGMLLKRIPGTYGFQ.

AMP-binding positions include G167, 193-198 (SRAITG), and T202. Catalysis depends on D255, which acts as the Proton donor. S263 and K287 together coordinate AMP.

Belongs to the thymidine/pyrimidine-nucleoside phosphorylase family. Type 2 subfamily.

The catalysed reaction is AMP + phosphate = alpha-D-ribose 1,5-bisphosphate + adenine. It carries out the reaction CMP + phosphate = cytosine + alpha-D-ribose 1,5-bisphosphate. It catalyses the reaction UMP + phosphate = alpha-D-ribose 1,5-bisphosphate + uracil. Functionally, catalyzes the conversion of AMP and phosphate to adenine and ribose 1,5-bisphosphate (R15P). Exhibits phosphorylase activity toward CMP and UMP in addition to AMP. Functions in an archaeal AMP degradation pathway, together with R15P isomerase and RubisCO. This chain is AMP phosphorylase, found in Methanosarcina barkeri (strain Fusaro / DSM 804).